A 310-amino-acid chain; its full sequence is Atrochrysone carboxyl ACP thioesterase CPUR_05436 (310 aa).

His105, His107, Asp109, and His110 together coordinate Zn(2+). Residue Asp109 is the Proton donor/acceptor of the active site.

It belongs to the metallo-beta-lactamase superfamily. Zn(2+) serves as cofactor.

The catalysed reaction is atrochrysone carboxyl-[ACP] + H2O = atrochrysone carboxylate + holo-[ACP] + H(+). Its pathway is pigment biosynthesis. In terms of biological role, atrochrysone carboxyl ACP thioesterase; part of the ergochrome gene cluster responsible for the typical purple-black color of the ergot sclerotia. The ergochrome gene cluster produces several ergot pigments including the yellow ergochrome secalonic acid and its derivatives, as well as the red anthraquinones endocrocin and clavorubin. The pathway begins with the synthesis of atrochrysone thioester by the polyketide synthase (PKS) CPUR_05437. The atrochrysone carboxyl ACP thioesterase CPUR_05436 then breaks the thioester bond and releases the atrochrysone carboxylic acid from CPUR_05437. The atrochrysone carboxylic acid is then converted to atrochrysone which is further transformed into emodin anthrone. The next step is performed by the anthrone oxygenase CPUR_05434 that catalyzes the oxidation of emodinanthrone to emodin. Emodin is further modified to yield monodictyphenone via several steps involving CPUR_05427, CPUR_05428, CPUR_05429 and CPUR_05430. The short chain dehydrogenase/reductase CPUR_05418 then catalyzes the C-5 ketoreduction to give the xanthone skeleton of the monomeric units. Ergochromes formation requires further dimerization steps of different xanthone units, probably catalyzed by the cytochrome P450 monooxygenase CPUR_05419. CPUR_05425, CPUR_05426 and CPUR_05431 are unique to Claviceps, thus it is likely that they are involved in further modification of xanthone units or in their dimerization. The yellow ergochromes and the red anthraquinone pigments endocrocin and clavorubin are products from the same PKS derived precursors and the latter are likely shunt products in the pathway of xanthone biosynthesis. It is proposed that atrochrysone carboxylic acid released from the PKS CPUR_05437 can also be converted to endocrocin anthrone which is further oxidized into endocrocin by CPUR_05435. Endocrocin could be then modified to clavorubin, possibly by CPUR_05423 and CPUR_05431. Clavorubin is the principal anthraquinone metabolite produced by the cluster with a much higher yield compared to endocrocin. The chain is Atrochrysone carboxyl ACP thioesterase CPUR_05436 from Claviceps purpurea (strain 20.1) (Ergot fungus).